The chain runs to 337 residues: Holliday junction branch migration complex subunit RuvB (337 aa).

The tract at residues 1-20 is disordered; sequence MQTRFVSPVNHDEEQDEPSV. Residues 1 to 181 are large ATPase domain (RuvB-L); the sequence is MQTRFVSPVN…FGIILRLDLY (181 aa). ATP contacts are provided by residues Arg-21, Gly-62, Lys-65, Thr-66, Thr-67, 128–130, Arg-171, Tyr-181, and Arg-218; that span reads EDY. Residue Thr-66 participates in Mg(2+) binding. The segment at 182–252 is small ATPAse domain (RuvB-S); sequence DPSELTVIVT…IANTALFALG (71 aa). Positions 255–337 are head domain (RuvB-H); sequence QKGLDILDRR…SHTRDLTSFL (83 aa). 2 residues coordinate DNA: Arg-310 and Arg-315.

It belongs to the RuvB family. Homohexamer. Forms an RuvA(8)-RuvB(12)-Holliday junction (HJ) complex. HJ DNA is sandwiched between 2 RuvA tetramers; dsDNA enters through RuvA and exits via RuvB. An RuvB hexamer assembles on each DNA strand where it exits the tetramer. Each RuvB hexamer is contacted by two RuvA subunits (via domain III) on 2 adjacent RuvB subunits; this complex drives branch migration. In the full resolvosome a probable DNA-RuvA(4)-RuvB(12)-RuvC(2) complex forms which resolves the HJ.

The protein resides in the cytoplasm. It catalyses the reaction ATP + H2O = ADP + phosphate + H(+). In terms of biological role, the RuvA-RuvB-RuvC complex processes Holliday junction (HJ) DNA during genetic recombination and DNA repair, while the RuvA-RuvB complex plays an important role in the rescue of blocked DNA replication forks via replication fork reversal (RFR). RuvA specifically binds to HJ cruciform DNA, conferring on it an open structure. The RuvB hexamer acts as an ATP-dependent pump, pulling dsDNA into and through the RuvAB complex. RuvB forms 2 homohexamers on either side of HJ DNA bound by 1 or 2 RuvA tetramers; 4 subunits per hexamer contact DNA at a time. Coordinated motions by a converter formed by DNA-disengaged RuvB subunits stimulates ATP hydrolysis and nucleotide exchange. Immobilization of the converter enables RuvB to convert the ATP-contained energy into a lever motion, pulling 2 nucleotides of DNA out of the RuvA tetramer per ATP hydrolyzed, thus driving DNA branch migration. The RuvB motors rotate together with the DNA substrate, which together with the progressing nucleotide cycle form the mechanistic basis for DNA recombination by continuous HJ branch migration. Branch migration allows RuvC to scan DNA until it finds its consensus sequence, where it cleaves and resolves cruciform DNA. The protein is Holliday junction branch migration complex subunit RuvB of Methanospirillum hungatei JF-1 (strain ATCC 27890 / DSM 864 / NBRC 100397 / JF-1).